Consider the following 555-residue polypeptide: 2-isopropylmalate synthase (555 aa).

The Pyruvate carboxyltransferase domain maps to Pro30–Asn303. Residues Asp39, His242, His244, and Asn278 each contribute to the Mg(2+) site. Positions Gln437–Lys555 are regulatory domain.

The protein belongs to the alpha-IPM synthase/homocitrate synthase family. LeuA type 2 subfamily. As to quaternary structure, homodimer. Mg(2+) is required as a cofactor.

Its subcellular location is the cytoplasm. The catalysed reaction is 3-methyl-2-oxobutanoate + acetyl-CoA + H2O = (2S)-2-isopropylmalate + CoA + H(+). It participates in amino-acid biosynthesis; L-leucine biosynthesis; L-leucine from 3-methyl-2-oxobutanoate: step 1/4. Its function is as follows. Catalyzes the condensation of the acetyl group of acetyl-CoA with 3-methyl-2-oxobutanoate (2-ketoisovalerate) to form 3-carboxy-3-hydroxy-4-methylpentanoate (2-isopropylmalate). This is 2-isopropylmalate synthase from Brucella suis biovar 1 (strain 1330).